A 239-amino-acid chain; its full sequence is DnaA regulatory inactivator Hda (239 aa).

Belongs to the DnaA family. HdA subfamily. The active form seems to be an ADP-bound monomer. Forms the RIDA complex (regulatory inactivation of DnaA) of ATP-DnaA, ADP-Hda and the DNA-loaded beta sliding clamp (dnaN).

Mediates the interaction of DNA replication initiator protein DnaA with DNA polymerase subunit beta sliding clamp (dnaN). Stimulates hydrolysis of ATP-DnaA to ADP-DnaA, rendering DnaA inactive for reinitiation, a process called regulatory inhibition of DnaA or RIDA. This Yersinia enterocolitica serotype O:8 / biotype 1B (strain NCTC 13174 / 8081) protein is DnaA regulatory inactivator Hda.